Here is a 1463-residue protein sequence, read N- to C-terminus: Nucleoporin NUP152 (1463 aa).

Disordered regions lie at residues 1–199, 339–568, and 609–1064; these read MDPP…GRPG, GIPD…ELPA, and TTKK…FGNT. Composition is skewed to polar residues over residues 32-42, 81-92, 144-155, 175-191, 367-378, and 416-472; these read STNSNSVTANA, GPSSKLSQSVSA, TSSKATSFSGAP, TTYT…QSFP, PSSSTFTHTASP, and PAKT…SSNI. Positions 481–498 are enriched in acidic residues; the sequence is KDEDNESDTGSEAEAEDE. 2 stretches are compositionally biased toward low complexity: residues 511–523 and 616–630; these read GASS…GGES and AAAP…TPTT. Composition is skewed to polar residues over residues 651-664, 673-689, and 720-746; these read IFGS…TSIP, PATS…TSAA, and TTES…TQPQ. An FXFG 1 repeat occupies 729–732; it reads FQFG. Positions 753–768 are enriched in low complexity; sequence KPPSTETPTEKPATTS. The segment covering 777 to 789 has biased composition (polar residues); it reads PATTSSLFGSATT. Residues 803–813 show a composition bias toward low complexity; sequence TTTPADKPTTT. The span at 814 to 828 shows a compositional bias: polar residues; it reads NLFGSTSTQATSGSD. The stretch at 835–838 is one FXFG 2 repeat; it reads FAFG. Over residues 840-863 the composition is skewed to polar residues; that stretch reads TTESKPTTSLFGSTTPAPATSTEN. Over residues 870 to 881 the composition is skewed to low complexity; sequence ATTTSATPATNT. Composition is skewed to polar residues over residues 900-923, 940-961, 968-987, 998-1029, and 1037-1055; these read GSST…STEQ, GSTS…TMTE, SIST…STTE, STEQ…STEQ, and PAST…TTEN. The FXFG 3 repeat unit spans residues 910-913; that stretch reads FQFG. FXFG repeat units follow at residues 1074-1077, 1127-1130, 1141-1144, and 1152-1155; these read FNFG and FTFG. Disordered stretches follow at residues 1155-1174 and 1179-1217; these read GASS…PIFS and QPSS…KHVP. Positions 1156-1170 are enriched in low complexity; it reads ASSDSSNASNNASSA. Residues 1173–1176 form an FXFG 8 repeat; that stretch reads FSFG. Residues 1179–1199 are compositionally biased toward polar residues; sequence QPSSTPLFGQNNPPAASNIFA. Residues 1236-1239 form an FXFG 9 repeat; the sequence is FTFG. Residues 1240 to 1271 are compositionally biased toward low complexity; the sequence is GASSLATTPAASTPEPSAANAAAAGEDQGASA. 2 disordered regions span residues 1240–1335 and 1416–1463; these read GASS…PWKV and AALE…DEKK. The RanBD1 domain maps to 1289–1427; sequence GEEDESVVHE…LEEHKKANEK (139 aa). Residues 1418–1463 show a composition bias toward basic and acidic residues; it reads LEEHKKANEKKDGEKNEESEKKDEKQEEKKNEEKKDEKEEKKDEKK.

As to quaternary structure, the nuclear pore complex (NPC) constitutes the exclusive means of nucleocytoplasmic transport. NPCs allow the passive diffusion of ions and small molecules and the active, nuclear transport receptor-mediated bidirectional transport of macromolecules such as proteins, RNAs, ribonucleoparticles (RNPs), and ribosomal subunits across the nuclear envelope. The 55-60 MDa NPC is composed of at least 28 different subunits: AMO1, ELYS, GLE1, GLE2, MLP1, NDC1, NIC96, NSP1, NUP133, NUP145, NUP152, NUP159, NUP170, NUP188, NUP192, NUP37, NUP49, NUP53, NUP56, NUP57, NUP82, NUP84, NUP85, POM152, POM33, POM34, SEC13 and SEH1. Due to its 8-fold rotational symmetry, all subunits are present with 8 copies or multiples thereof.

The protein resides in the nucleus. It is found in the nuclear pore complex. The protein localises to the nucleus membrane. Its function is as follows. Functions as a component of the nuclear pore complex (NPC). NPC components, collectively referred to as nucleoporins (NUPs), can play the role of both NPC structural components and of docking or interaction partners for transiently associated nuclear transport factors. Active directional transport is assured by both, a Phe-Gly (FG) repeat affinity gradient for these transport factors across the NPC and a transport cofactor concentration gradient across the nuclear envelope (GSP1 and GSP2 GTPases associated predominantly with GTP in the nucleus, with GDP in the cytoplasm). This chain is Nucleoporin NUP152 (NUP152), found in Chaetomium thermophilum (strain DSM 1495 / CBS 144.50 / IMI 039719) (Thermochaetoides thermophila).